The following is a 152-amino-acid chain: Ribonuclease pancreatic (152 aa).

An N-terminal signal peptide occupies residues 1-24 (MALDKSVILLPLLVLVLLVLGCLG). Residues Lys31 and Arg34 each coordinate substrate. The active-site Proton acceptor is His36. N-linked (GlcNAc...) asparagine glycosylation occurs at Asn46. 4 disulfides stabilise this stretch: Cys50-Cys108, Cys64-Cys119, Cys82-Cys134, and Cys89-Cys96. Substrate is bound by residues 65–69 (KPVNT), Lys90, and Arg109. A glycan (N-linked (GlcNAc...) asparagine) is linked at Asn112. Residue His143 is the Proton donor of the active site.

The protein belongs to the pancreatic ribonuclease family. As to quaternary structure, monomer. Interacts with and forms tight 1:1 complexes with RNH1. Dimerization of two such complexes may occur. Interaction with RNH1 inhibits this protein.

Its subcellular location is the secreted. The enzyme catalyses an [RNA] containing cytidine + H2O = an [RNA]-3'-cytidine-3'-phosphate + a 5'-hydroxy-ribonucleotide-3'-[RNA].. The catalysed reaction is an [RNA] containing uridine + H2O = an [RNA]-3'-uridine-3'-phosphate + a 5'-hydroxy-ribonucleotide-3'-[RNA].. Endonuclease that catalyzes the cleavage of RNA on the 3' side of pyrimidine nucleotides. Acts on single-stranded and double-stranded RNA. The sequence is that of Ribonuclease pancreatic (RNASE1) from Papio hamadryas (Hamadryas baboon).